A 248-amino-acid chain; its full sequence is Ubiquinone biosynthesis O-methyltransferase (248 aa).

Residues Arg-41, Gly-72, Asp-93, and Met-136 each contribute to the S-adenosyl-L-methionine site.

Belongs to the methyltransferase superfamily. UbiG/COQ3 family.

It carries out the reaction a 3-demethylubiquinol + S-adenosyl-L-methionine = a ubiquinol + S-adenosyl-L-homocysteine + H(+). It catalyses the reaction a 3-(all-trans-polyprenyl)benzene-1,2-diol + S-adenosyl-L-methionine = a 2-methoxy-6-(all-trans-polyprenyl)phenol + S-adenosyl-L-homocysteine + H(+). Its pathway is cofactor biosynthesis; ubiquinone biosynthesis. In terms of biological role, O-methyltransferase that catalyzes the 2 O-methylation steps in the ubiquinone biosynthetic pathway. This Brucella abortus (strain 2308) protein is Ubiquinone biosynthesis O-methyltransferase.